The primary structure comprises 410 residues: MKDTVSQPAGGRGATAPRPADAASPSCGSSPSADSLSVVLAGGGTAGHVEPAMAVADALVALDPRVRITALGTPRGLETRLVPQRGYHLELITAVPMPRKPGGDLARLPSRVWRAVREARDVLDDVDADVVVGFGGYVALPAYLAARGLPLPPRRRRRIPVVIHEANARAGLANRVGAHTADRVLSAVPDSGLRRAEVVGVPVRASIAALDRAVLRAEARAHFGFPDDARVLLVFGGSQGAVSLNRAVSGAAADLAAAGVCVLHAHGPQNVLELRRRAQGDPPYVAVPYLDRMELAYAAADLVICRAGAMTVAEVSAVGLPAIYVPLPIGNGEQRLNALPVVNAGGGMVVADAALTPELVARQVAGLLTDPARLAAMTAAAARVGHRDAAGQVARAALAVATGAGARTTT.

The tract at residues 1-34 (MKDTVSQPAGGRGATAPRPADAASPSCGSSPSAD) is disordered. Positions 14–34 (ATAPRPADAASPSCGSSPSAD) are enriched in low complexity. Residues 45–47 (TAG), asparagine 167, arginine 204, serine 238, and glutamine 334 each bind UDP-N-acetyl-alpha-D-glucosamine.

Belongs to the glycosyltransferase 28 family. MurG subfamily.

It localises to the cell membrane. The enzyme catalyses di-trans,octa-cis-undecaprenyl diphospho-N-acetyl-alpha-D-muramoyl-L-alanyl-D-glutamyl-meso-2,6-diaminopimeloyl-D-alanyl-D-alanine + UDP-N-acetyl-alpha-D-glucosamine = di-trans,octa-cis-undecaprenyl diphospho-[N-acetyl-alpha-D-glucosaminyl-(1-&gt;4)]-N-acetyl-alpha-D-muramoyl-L-alanyl-D-glutamyl-meso-2,6-diaminopimeloyl-D-alanyl-D-alanine + UDP + H(+). It functions in the pathway cell wall biogenesis; peptidoglycan biosynthesis. Cell wall formation. Catalyzes the transfer of a GlcNAc subunit on undecaprenyl-pyrophosphoryl-MurNAc-pentapeptide (lipid intermediate I) to form undecaprenyl-pyrophosphoryl-MurNAc-(pentapeptide)GlcNAc (lipid intermediate II). This chain is UDP-N-acetylglucosamine--N-acetylmuramyl-(pentapeptide) pyrophosphoryl-undecaprenol N-acetylglucosamine transferase, found in Mycobacterium bovis (strain ATCC BAA-935 / AF2122/97).